A 181-amino-acid chain; its full sequence is Adenine phosphoribosyltransferase (181 aa).

The protein belongs to the purine/pyrimidine phosphoribosyltransferase family. In terms of assembly, homodimer.

The protein localises to the cytoplasm. It catalyses the reaction AMP + diphosphate = 5-phospho-alpha-D-ribose 1-diphosphate + adenine. It functions in the pathway purine metabolism; AMP biosynthesis via salvage pathway; AMP from adenine: step 1/1. Its function is as follows. Catalyzes a salvage reaction resulting in the formation of AMP, that is energically less costly than de novo synthesis. The chain is Adenine phosphoribosyltransferase from Cytophaga hutchinsonii (strain ATCC 33406 / DSM 1761 / CIP 103989 / NBRC 15051 / NCIMB 9469 / D465).